The primary structure comprises 645 residues: Cysteine-rich receptor-like protein kinase 19 (645 aa).

The first 20 residues, 1 to 20 (MSSLISFIFLFLFSSITASA), serve as a signal peptide directing secretion. At 21-262 (QNTFYLYHNC…PRPGKGGNSS (242 aa)) the chain is on the extracellular side. Gnk2-homologous domains follow at residues 24–129 (FYLY…NRNI) and 135–239 (TDGG…NYAF). N-linked (GlcNAc...) asparagine glycosylation is found at Asn-29, Asn-39, Asn-57, Asn-101, Asn-185, Asn-241, and Asn-260. Residues 263–283 (VIIIAVVVPITVLFLLLVAVF) traverse the membrane as a helical segment. The Cytoplasmic segment spans residues 284 to 645 (SVRAKNKRTL…EASITRVTPR (362 aa)). The region spanning 326 to 603 (FLPINKLGQG…IVQMLTTSLI (278 aa)) is the Protein kinase domain. ATP is bound by residues 332 to 340 (LGQGGFGEV) and Lys-354. At Tyr-399 the chain carries Phosphotyrosine. Residue Asp-451 is the Proton acceptor of the active site. Position 491 is a phosphothreonine (Thr-491). Tyr-499 is subject to Phosphotyrosine. The segment at 616 to 645 (RSKQEQAGPSIDSSTHCSVDEASITRVTPR) is disordered. Positions 620 to 632 (EQAGPSIDSSTHC) are enriched in polar residues.

The protein belongs to the protein kinase superfamily. Ser/Thr protein kinase family. CRK subfamily. As to quaternary structure, interacts with MWL1.

The protein localises to the membrane. The enzyme catalyses L-seryl-[protein] + ATP = O-phospho-L-seryl-[protein] + ADP + H(+). The catalysed reaction is L-threonyl-[protein] + ATP = O-phospho-L-threonyl-[protein] + ADP + H(+). The protein is Cysteine-rich receptor-like protein kinase 19 (CRK19) of Arabidopsis thaliana (Mouse-ear cress).